The primary structure comprises 112 residues: 2Fe-2S ferredoxin (112 aa).

One can recognise a 2Fe-2S ferredoxin-type domain in the interval 5-107; that stretch reads IKVTFIINDG…GIKVRLPSAT (103 aa). 4 residues coordinate [2Fe-2S] cluster: Cys42, Cys48, Cys51, and Cys88.

The protein belongs to the adrenodoxin/putidaredoxin family. [2Fe-2S] cluster is required as a cofactor.

Functionally, ferredoxin are iron-sulfur proteins that transfer electrons in a wide variety of metabolic reactions. The polypeptide is 2Fe-2S ferredoxin (fdxB) (Rickettsia montanensis).